The sequence spans 186 residues: Putative 5'(3')-deoxyribonucleotidase (186 aa).

This sequence belongs to the 5'(3')-deoxyribonucleotidase family. Requires Mg(2+) as cofactor.

In terms of biological role, dephosphorylates the 5' and 2'(3')-phosphates of deoxyribonucleotides. This chain is Putative 5'(3')-deoxyribonucleotidase, found in Bordetella parapertussis (strain 12822 / ATCC BAA-587 / NCTC 13253).